The chain runs to 93 residues: Large ribosomal subunit protein uL23 (93 aa).

Belongs to the universal ribosomal protein uL23 family. As to quaternary structure, part of the 50S ribosomal subunit. Contacts protein L29, and trigger factor when it is bound to the ribosome.

In terms of biological role, one of the early assembly proteins it binds 23S rRNA. One of the proteins that surrounds the polypeptide exit tunnel on the outside of the ribosome. Forms the main docking site for trigger factor binding to the ribosome. In Nautilia profundicola (strain ATCC BAA-1463 / DSM 18972 / AmH), this protein is Large ribosomal subunit protein uL23.